A 370-amino-acid polypeptide reads, in one-letter code: Ubiquinone biosynthesis O-methyltransferase, mitochondrial (370 aa).

Residues 1 to 86 (MWGGSKLSSS…SYRLPWTRPY (86 aa)) constitute a mitochondrion transit peptide. An S-adenosyl-L-methionine-binding site is contributed by Arg-125. N6-acetyllysine occurs at positions 144 and 150. Residues Gly-155 and Asp-176 each contribute to the S-adenosyl-L-methionine site. Position 197 is an N6-acetyllysine (Lys-197). Ser-223 is a binding site for S-adenosyl-L-methionine. Residues Glu-224, Glu-227, and His-228 each contribute to the Mg(2+) site.

This sequence belongs to the class I-like SAM-binding methyltransferase superfamily. UbiG/COQ3 family. Component of a multi-subunit COQ enzyme complex, composed of at least COQ3, COQ4, COQ5, COQ6, COQ7 and COQ9. Mg(2+) serves as cofactor.

It localises to the mitochondrion inner membrane. It carries out the reaction 3,4-dihydroxy-5-(all-trans-decaprenyl)benzoate + S-adenosyl-L-methionine = 4-hydroxy-3-methoxy-5-(all-trans-decaprenyl)benzoate + S-adenosyl-L-homocysteine + H(+). It catalyses the reaction a 3-demethylubiquinone + S-adenosyl-L-methionine = a ubiquinone + S-adenosyl-L-homocysteine. The enzyme catalyses 3-demethylubiquinol-10 + S-adenosyl-L-methionine = ubiquinol-10 + S-adenosyl-L-homocysteine + H(+). It participates in cofactor biosynthesis; ubiquinone biosynthesis. In terms of biological role, O-methyltransferase required for two non-consecutive steps during ubiquinone biosynthesis. Catalyzes the 2 O-methylation of 3,4-dihydroxy-5-(all-trans-decaprenyl)benzoic acid into 4-hydroxy-3-methoxy-5-(all-trans-decaprenyl)benzoic acid. Also catalyzes the last step of ubiquinone biosynthesis by mediating methylation of 3-demethylubiquinone into ubiquinone. Also able to mediate the methylation of 3-demethylubiquinol-10 into ubiquinol-10. This is Ubiquinone biosynthesis O-methyltransferase, mitochondrial from Bos taurus (Bovine).